Consider the following 813-residue polypeptide: Xaa-Pro dipeptidyl-peptidase (813 aa).

Catalysis depends on charge relay system residues serine 375, aspartate 495, and histidine 526.

The protein belongs to the peptidase S15 family. Homodimer.

The protein resides in the cytoplasm. The catalysed reaction is Hydrolyzes Xaa-Pro-|- bonds to release unblocked, N-terminal dipeptides from substrates including Ala-Pro-|-p-nitroanilide and (sequentially) Tyr-Pro-|-Phe-Pro-|-Gly-Pro-|-Ile.. In terms of biological role, removes N-terminal dipeptides sequentially from polypeptides having unsubstituted N-termini provided that the penultimate residue is proline. The protein is Xaa-Pro dipeptidyl-peptidase of Lactiplantibacillus plantarum (strain ATCC BAA-793 / NCIMB 8826 / WCFS1) (Lactobacillus plantarum).